Here is a 591-residue protein sequence, read N- to C-terminus: MEKRTNYCGELNETHIDQHVVLHGWVQKRRDLGGLIFIDLRDREGIVQVVFNPEFSKEALEIADSVRNEFVVTIKGKVHARGEKAINEKLATGKVEILAEEITILNTSKTPPFYIEDGVNVSDELRLKYRYLDLRRPEMNNIFKMRHTVTRTFRNKLDALGFFDIETPYLTKSTPEGARDYLVPSRVYPGNFYALPQSPQILKQLLMTAGFDKYYQIVRCFRDEDLRGDRQPEFTQIDLETSFLTKEKIQAITEDMLIDVVKEAKGITIEKPFPRMTYKEAMDRFGSDKPDIRFGLELQNVSEVVKDVDFKVFQSAIENGGEVKAINAKAAAANFSRKDLDALGIFVSNYGAKGLAWLKVEAGELKGPIAKFFPEEKALELKAALKAEDGDLLLFAADKADIVAASLGALRNKLGKDLNLINEDELAFLWVTDWPLFEYDEEAGRYVSAHHPFTLPKEEDIPLLETDSSKVMAEAYDIVLNGYEIGGGSLRIYKKEVQESMFRALGFTDESAKEQFGFLMDALEYGTPPHGGIALGLDRIVMILAGRNNLRDTIAFPKTGSAVDPLTNAPGEVSDAQLDELKLQITKKELN.

Residue Glu176 participates in L-aspartate binding. The interval 200 to 203 (QILK) is aspartate. An L-aspartate-binding site is contributed by Arg222. ATP-binding positions include 222 to 224 (RDE) and Gln231. His450 serves as a coordination point for L-aspartate. Glu484 contacts ATP. L-aspartate is bound at residue Arg491. 536–539 (GLDR) serves as a coordination point for ATP.

The protein belongs to the class-II aminoacyl-tRNA synthetase family. Type 1 subfamily. Homodimer.

It is found in the cytoplasm. The catalysed reaction is tRNA(Asp) + L-aspartate + ATP = L-aspartyl-tRNA(Asp) + AMP + diphosphate. Catalyzes the attachment of L-aspartate to tRNA(Asp) in a two-step reaction: L-aspartate is first activated by ATP to form Asp-AMP and then transferred to the acceptor end of tRNA(Asp). The protein is Aspartate--tRNA ligase of Listeria welshimeri serovar 6b (strain ATCC 35897 / DSM 20650 / CCUG 15529 / CIP 8149 / NCTC 11857 / SLCC 5334 / V8).